The following is a 329-amino-acid chain: tRNA N6-adenosine threonylcarbamoyltransferase (329 aa).

Fe cation-binding residues include His107 and His111. Substrate contacts are provided by residues 129–133 (LVSGG), Asp162, Gly175, and Asn268. Asp296 lines the Fe cation pocket.

Belongs to the KAE1 / TsaD family. The cofactor is Fe(2+).

The protein resides in the cytoplasm. It carries out the reaction L-threonylcarbamoyladenylate + adenosine(37) in tRNA = N(6)-L-threonylcarbamoyladenosine(37) in tRNA + AMP + H(+). Functionally, required for the formation of a threonylcarbamoyl group on adenosine at position 37 (t(6)A37) in tRNAs that read codons beginning with adenine. Is involved in the transfer of the threonylcarbamoyl moiety of threonylcarbamoyl-AMP (TC-AMP) to the N6 group of A37, together with TsaE and TsaB. TsaD likely plays a direct catalytic role in this reaction. The chain is tRNA N6-adenosine threonylcarbamoyltransferase from Nitratiruptor sp. (strain SB155-2).